The chain runs to 678 residues: uncharacterized protein (678 aa).

A run of 8 helical transmembrane segments spans residues 228–250, 263–285, 300–322, 334–356, 361–380, 387–405, 420–439, and 455–477; these read FFVI…FSFL, LAMW…VATQ, STGA…LSCV, MLHN…AVLF, FSLS…FFSA, RIML…YAYL, NVFF…TLFF, and NLLL…SVSL. The segment at 653 to 678 is disordered; that stretch reads PSSQGVHATPEKNACIRDETVPNLQE.

The protein localises to the cell membrane. This is an uncharacterized protein from Treponema pallidum (strain Nichols).